Consider the following 118-residue polypeptide: Small ribosomal subunit protein uS13 (118 aa).

The disordered stretch occupies residues 92-118 (KKHLPVRGQRTKTNARTRKGPRKPIKK).

Belongs to the universal ribosomal protein uS13 family. Part of the 30S ribosomal subunit. Forms a loose heterodimer with protein S19. Forms two bridges to the 50S subunit in the 70S ribosome.

Functionally, located at the top of the head of the 30S subunit, it contacts several helices of the 16S rRNA. In the 70S ribosome it contacts the 23S rRNA (bridge B1a) and protein L5 of the 50S subunit (bridge B1b), connecting the 2 subunits; these bridges are implicated in subunit movement. Contacts the tRNAs in the A and P-sites. The chain is Small ribosomal subunit protein uS13 from Wigglesworthia glossinidia brevipalpis.